We begin with the raw amino-acid sequence, 266 residues long: Thymidylate synthase (266 aa).

Arginine 24 serves as a coordination point for dUMP. Histidine 54 provides a ligand contact to (6R)-5,10-methylene-5,6,7,8-tetrahydrofolate. 129–130 contacts dUMP; sequence RR. Cysteine 149 acts as the Nucleophile in catalysis. DUMP-binding positions include 169–172, asparagine 180, and 210–212; these read RSAD and HIY. Aspartate 172 lines the (6R)-5,10-methylene-5,6,7,8-tetrahydrofolate pocket. Alanine 265 contacts (6R)-5,10-methylene-5,6,7,8-tetrahydrofolate.

This sequence belongs to the thymidylate synthase family. Bacterial-type ThyA subfamily. Homodimer.

It localises to the cytoplasm. The catalysed reaction is dUMP + (6R)-5,10-methylene-5,6,7,8-tetrahydrofolate = 7,8-dihydrofolate + dTMP. It functions in the pathway pyrimidine metabolism; dTTP biosynthesis. Catalyzes the reductive methylation of 2'-deoxyuridine-5'-monophosphate (dUMP) to 2'-deoxythymidine-5'-monophosphate (dTMP) while utilizing 5,10-methylenetetrahydrofolate (mTHF) as the methyl donor and reductant in the reaction, yielding dihydrofolate (DHF) as a by-product. This enzymatic reaction provides an intracellular de novo source of dTMP, an essential precursor for DNA biosynthesis. This Mycolicibacterium smegmatis (strain ATCC 700084 / mc(2)155) (Mycobacterium smegmatis) protein is Thymidylate synthase.